The sequence spans 584 residues: MGNQMSVPQRVEDQENEPEAETYQDNASALNGVPVVVSTHTVQHLEEVDLGISVKTDNVATSSPETTEISAVADANGKNLGKEAKPEAPAAKSRFFLMLSRPVPGRTGDQAADSSLGSVKLDVSSNKAPANKDPSESWTLPVAAGPGQDTDKTPGHAPAQDKVLSAARDPTLLPPETGGAGGEAPSKPKDSSFFDKFFKLDKGQEKVPGDSQQEAKRAEHQDKVDEVPGLSGQSDDVPAGKDIVDGKEKEGQELGTADCSVPGDPEGLETAKDDSQAAAIAENNNSIMSFFKTLVSPNKAETKKDPEDTGAEKSPTTSADLKSDKANFTSQETQGAGKNSKGCNPSGHTQSVTTPEPAKEGTKEKSGPTSLPLGKLFWKKSVKEDSVPTGAEENVVCESPVEIIKSKEVESALQTVDLNEGDAAPEPTEAKLKREESKPRTSLMAFLRQMSVKGDGGITHSEEINGKDSSCQTSDSTEKTITPPEPEPTGAPQKGKEGSSKDKKSAAEMNKQKSNKQEAKEPAQCTEQATVDTNSLQNGDKLQKRPEKRQQSLGGFFKGLGPKRMLDAQVQTDPVSIGPVGKSK.

Disordered stretches follow at residues 1 to 29, 59 to 280, and 297 to 377; these read MGNQ…NASA, VATS…AAAI, and PNKA…GKLF. Polar residues-rich tracts occupy residues 59 to 69 and 112 to 128; these read VATSSPETTEI and ADSS…SNKA. Residues Ser124 and Ser192 each carry the phosphoserine modification. 3 stretches are compositionally biased toward basic and acidic residues: residues 186 to 226, 238 to 252, and 300 to 311; these read SKPK…KVDE, PAGK…KEGQ, and AETKKDPEDTGA. Ser314 carries the phosphoserine modification. The segment covering 314–354 has biased composition (polar residues); that stretch reads SPTTSADLKSDKANFTSQETQGAGKNSKGCNPSGHTQSVTT. Over residues 357-366 the composition is skewed to basic and acidic residues; sequence PAKEGTKEKS. Phosphoserine is present on residues Ser381 and Ser399. Residues 415-584 form a disordered region; sequence TVDLNEGDAA…VSIGPVGKSK (170 aa). Residues 428 to 439 show a composition bias toward basic and acidic residues; that stretch reads TEAKLKREESKP. A Phosphothreonine modification is found at Thr480. A compositionally biased stretch (basic and acidic residues) spans 494 to 506; it reads KGKEGSSKDKKSA. The span at 525–540 shows a compositional bias: polar residues; sequence CTEQATVDTNSLQNGD. The span at 541–550 shows a compositional bias: basic and acidic residues; that stretch reads KLQKRPEKRQ. Ser552 bears the Phosphoserine mark. The segment at 565–584 is interacts with DYNLL1 and DYNLL2; that stretch reads MLDAQVQTDPVSIGPVGKSK.

In terms of assembly, homodimer. Interacts with DYNLL1 and DYNLL2. As to expression, highly expressed in the brain and, more specifically, in oligodendrocytes (at protein level). Expressed in the prostate, and at lower levels in testis, intestine and colon. Overexpressed in most breast cancer cell lines and down-regulated in some colorectal tumors.

The protein localises to the cytoplasm. In terms of biological role, required for myelination. This chain is Breast carcinoma-amplified sequence 1 (BCAS1), found in Homo sapiens (Human).